A 909-amino-acid polypeptide reads, in one-letter code: MAASVENRQFSHLEPGLSGVVRSFKPRSDSPVRGCNFPLNNELTNFQKKPNTTIYLDCSSSEDDDDDDDKNEYLQMIRKGKLEVEPSVHDIRDEGTADNWIERNNSMIRLTGKHPFNSEPPLARLMHHGFITPVPLHYVRNHGPVPKGMWDDWTVEVTGLVKRPMKFTMEQLVNEFPSRELPVTLVCAGNRRKEQNMVKQTIGFNWGAAAVSTTVWRGVPLRAILKRCGIYSRTKGALNICFEGADVLPGGGGSKYGTSIKKEFAMDPSRDIIIAYMQNGEKLTPDHGFPLRMIIPGFIGGRMVKWLKRIIVTTQESESYYHYKDNRVLPPHVDAELANAEAWWYKPEYIINELNINSVITTPCHEEILPINSWTTQRPYTLRGYSYSGGGKKVTRVEVTMDGGETWNVCTVDHPEKPNKYGKYWCWCFWSLEVEVLDLLSAKEIAVRAWDETLNTQPEKLIWNVMGMMNNCWFRVKTNVCKPHKGEIGIVFEHPTQPGNLSGGWMAKERHLEISAEAPPTLKKSISTPFMNTASKMYSMSEVKKHNSADSAWIIVHGHVYDATRFLKDHPGGIDSILINAGTDCTEEFDAIHSDKAKKLLEDFRIGELITTGYTSDSSPNNSVHGSSSFSGFLAPIKELAPAVRSVALIPREKIPCKLVDKKSISHDVRKFRFALPSEDQVLGLPVGKHIFLCAIIDDKLCMRAYTPTSTVDEVGYFELVVKIYFKGIVPKFPNGGQMSQYLDSLPLGAFVDVKGPLGHIEYQGRGNFLVHGKRKFAKKLAMLAGGTGITPVYQVMQAILKDPEDETEMHVVYANRTEDDILLKDELDSWAVKLPERVKVWYVVQDSIKEGWKYSTGFITEAVLREHIPLPSQTTLALACGPPPMIQFAVNPNLEKMGYDIKDSLLVF.

Residue C187 coordinates Mo-molybdopterin. The 76-residue stretch at 535-610 folds into the Cytochrome b5 heme-binding domain; it reads SKMYSMSEVK…LEDFRIGELI (76 aa). 2 residues coordinate heme: H570 and H593. The FAD-binding FR-type domain occupies 652–764; sequence REKIPCKLVD…KGPLGHIEYQ (113 aa). Residues 704-707, 721-725, F726, F733, 738-740, and T791 each bind FAD; these read RAYT, VVKIY, and QMS.

This sequence belongs to the nitrate reductase family. In terms of assembly, homodimer. It depends on FAD as a cofactor. Heme serves as cofactor. Mo-molybdopterin is required as a cofactor.

It carries out the reaction nitrite + NAD(+) + H2O = nitrate + NADH + H(+). Its activity is regulated as follows. Regulated by the nitrogen source and controlled by the circadian rhythm. In terms of biological role, nitrate reductase is a key enzyme involved in the first step of nitrate assimilation in plants, fungi and bacteria. The chain is Nitrate reductase [NADH] (NIA) from Petunia hybrida (Petunia).